The primary structure comprises 233 residues: Pirin-like protein YhaK (233 aa).

It belongs to the pirin family. As to quaternary structure, monomer.

It is found in the cytoplasm. Functionally, does not have quercetin 2,3-dioxygenase activity. In Escherichia coli O157:H7, this protein is Pirin-like protein YhaK (yhaK).